Consider the following 286-residue polypeptide: Phosphatidylserine decarboxylase proenzyme (286 aa).

Catalysis depends on charge relay system; for autoendoproteolytic cleavage activity residues Asp-91, His-148, and Ser-251. Ser-251 (schiff-base intermediate with substrate; via pyruvic acid; for decarboxylase activity) is an active-site residue. Position 251 is a pyruvic acid (Ser); by autocatalysis (Ser-251).

It belongs to the phosphatidylserine decarboxylase family. PSD-B subfamily. Prokaryotic type I sub-subfamily. Heterodimer of a large membrane-associated beta subunit and a small pyruvoyl-containing alpha subunit. Requires pyruvate as cofactor. In terms of processing, is synthesized initially as an inactive proenzyme. Formation of the active enzyme involves a self-maturation process in which the active site pyruvoyl group is generated from an internal serine residue via an autocatalytic post-translational modification. Two non-identical subunits are generated from the proenzyme in this reaction, and the pyruvate is formed at the N-terminus of the alpha chain, which is derived from the carboxyl end of the proenzyme. The autoendoproteolytic cleavage occurs by a canonical serine protease mechanism, in which the side chain hydroxyl group of the serine supplies its oxygen atom to form the C-terminus of the beta chain, while the remainder of the serine residue undergoes an oxidative deamination to produce ammonia and the pyruvoyl prosthetic group on the alpha chain. During this reaction, the Ser that is part of the protease active site of the proenzyme becomes the pyruvoyl prosthetic group, which constitutes an essential element of the active site of the mature decarboxylase.

The protein resides in the cell membrane. It catalyses the reaction a 1,2-diacyl-sn-glycero-3-phospho-L-serine + H(+) = a 1,2-diacyl-sn-glycero-3-phosphoethanolamine + CO2. The protein operates within phospholipid metabolism; phosphatidylethanolamine biosynthesis; phosphatidylethanolamine from CDP-diacylglycerol: step 2/2. In terms of biological role, catalyzes the formation of phosphatidylethanolamine (PtdEtn) from phosphatidylserine (PtdSer). In Marinobacter nauticus (strain ATCC 700491 / DSM 11845 / VT8) (Marinobacter aquaeolei), this protein is Phosphatidylserine decarboxylase proenzyme.